Consider the following 121-residue polypeptide: Perlustrin-like protein (121 aa).

The first 23 residues, 1-23 (MKFGVGFLLSCLVALNTVQNMLA), serve as a signal peptide directing secretion. The IGFBP N-terminal domain maps to 24-104 (LSCLPCDFDT…FDFKGTCQES (81 aa)). Cystine bridges form between Cys26/Cys52, Cys29/Cys54, Cys36/Cys55, Cys45/Cys58, Cys66/Cys79, and Cys73/Cys101. 3 N-linked (GlcNAc...) asparagine glycosylation sites follow: Asn68, Asn81, and Asn117.

Component of the acid-insoluble organic matrix of calcified layers of the shell (at protein level).

It is found in the secreted. This Lottia gigantea (Giant owl limpet) protein is Perlustrin-like protein.